The chain runs to 230 residues: uncharacterized protein (230 aa).

This is an uncharacterized protein from Sinorhizobium fredii (strain NBRC 101917 / NGR234).